A 214-amino-acid chain; its full sequence is pH-sensitive calcium channel (214 aa).

The Cytoplasmic segment spans residues Met-1 to Arg-15. The chain crosses the membrane as a helical span at residues Ile-16–Val-37. Topologically, residues Pro-38 to Pro-44 are extracellular. A helical membrane pass occupies residues Leu-45–Met-59. At Arg-60–Gly-66 the chain is on the cytoplasmic side. Residues Tyr-67–Ser-86 form a helical membrane-spanning segment. At His-87–Tyr-95 the chain is on the extracellular side. Residues Val-96–Lys-117 form a helical membrane-spanning segment. Topologically, residues Met-118–Leu-122 are cytoplasmic. A helical membrane pass occupies residues Ser-123–Ser-146. Residues Pro-147–Ala-151 are Extracellular-facing. A helical membrane pass occupies residues Ala-152–Ile-175. Residues Lys-176–Ile-185 are Cytoplasmic-facing. A helical membrane pass occupies residues Pro-186–Phe-207. The Extracellular portion of the chain corresponds to Gly-208–Asp-214.

Belongs to the BI1 family. As to quaternary structure, monomer.

The protein localises to the cell membrane. It carries out the reaction Ca(2+)(in) = Ca(2+)(out). The calcium-release activity is mediated by two factors: pH and transmembrane ion gradient. It was proposed, based on an MD simulation, that the conserved aspartyl dyad (Asp-171-Asp-195) regulates Ca(2+) binding, pH sensing, and the channel pore opening and closing, and that protonation of Asp-171 probably weakens its interaction with Arg-60, facilitating the opening of the channel. Another study using nanodiscs suggests that Asp-171 is not a pH sensor regulating the pore dynamics; instead, it is only involved in the gating of calcium ions. When crystallized in detergents at different pH conditions, the transition between open and closed conformations is regulated by pH. Ca(2+) binding is inhibited by Na(+), K(+), Li(+), Yb(3+) and Lu(3+), but not by Mg(2+) and Mn(2+). Calcium channel that probably plays a role in the regulation of calcium homeostasis. Uptakes calcium ions and mediates calcium flux in proteoliposomes in a pH-dependent manner. When expressed in E.coli in the presence of high extracellular calcium concentrations, shows calcium-leak activity, increasing intracellular calcium concentration. It can also mediate Ca(2+) flux from the endoplamic reticulum (ER) when expressed in permeabilized mammalian cells. Calcium transport activity is also detected in ER-like lipid vesicles. This is pH-sensitive calcium channel from Bacillus subtilis (strain 168).